Here is an 864-residue protein sequence, read N- to C-terminus: NT-3 growth factor receptor (864 aa).

Positions 1–31 (MDVSLCPAKCSFWRIFLLGSVWLDYVGSVLA) are cleaved as a signal peptide. 2 disulfides stabilise this stretch: C32–C38 and C36–C45. Topologically, residues 32-429 (CPANCVCSKT…TVTHKPEEDT (398 aa)) are extracellular. N68, N72, and N79 each carry an N-linked (GlcNAc...) asparagine glycan. 2 LRR repeats span residues 104–125 (GLQK…AFAK) and 128–149 (HLRY…LFQT). N-linked (GlcNAc...) asparagine glycans are attached at residues N133 and N163. In terms of domain architecture, LRRCT spans 160 to 209 (NFFNCSCDIRWMQLWQEQGEARLDSQSLYCISADGSQLPLFRMNISQCDL). Cystine bridges form between C164–C189 and C166–C207. N-linked (GlcNAc...) asparagine glycosylation is found at N203, N218, N232, N259, N267, N272, and N294. Ig-like C2-type domains are found at residues 210 to 300 (PEIS…VALT) and 309 to 382 (SLVE…IAKN). A disulfide bridge connects residues C231 and C284. C320 and C362 are disulfide-bonded. N-linked (GlcNAc...) asparagine glycans are attached at residues N375 and N388. A helical membrane pass occupies residues 430-453 (FGVSIAVGLAAFACVLLVVLFIMI). Over 454–864 (NKYGRRSKFG…ATPIYLDILG (411 aa)) the chain is Cytoplasmic. Position 493 is a phosphoserine (S493). Y516 is modified (phosphotyrosine; by autocatalysis). The Protein kinase domain maps to 538–853 (IVLKRELGEG…EIYKILHALG (316 aa)). ATP is bound by residues 544–552 (LGEGAFGKV) and K572. D679 (proton acceptor) is an active-site residue. Phosphotyrosine; by autocatalysis is present on residues Y705, Y709, Y710, and Y859.

It belongs to the protein kinase superfamily. Tyr protein kinase family. Insulin receptor subfamily. As to quaternary structure, exists in a dynamic equilibrium between monomeric (low affinity) and dimeric (high affinity) structures. Binds SH2B2. Interacts with SQSTM1 and KIDINS220. Interacts with PTPRS. Interacts with MAPK8IP3/JIP3. Post-translationally, ligand-mediated auto-phosphorylation. In terms of tissue distribution, widely expressed, mainly in the nervous tissue.

It localises to the membrane. It carries out the reaction L-tyrosyl-[protein] + ATP = O-phospho-L-tyrosyl-[protein] + ADP + H(+). Functionally, receptor tyrosine kinase involved in nervous system and probably heart development. Upon binding of its ligand NTF3/neurotrophin-3, NTRK3 autophosphorylates and activates different signaling pathways, including the phosphatidylinositol 3-kinase/AKT and the MAPK pathways, that control cell survival and differentiation. NTRK3 isoforms containing insertions within the kinase domain can autophosphorylate in response to NTF3/neurotrophin-3, but cannot mediate downstream phenotypic responses. The polypeptide is NT-3 growth factor receptor (Ntrk3) (Rattus norvegicus (Rat)).